Here is a 402-residue protein sequence, read N- to C-terminus: Tyrosine-protein kinase transforming protein ros (402 aa).

Residues 98–377 (LNLHKLLGSG…KLQEIRHSPL (280 aa)) enclose the Protein kinase domain. Residues 104-112 (LGSGAFGEV) and K133 each bind ATP. D232 serves as the catalytic Proton acceptor. Y268 carries the phosphotyrosine; by autocatalysis modification.

Belongs to the protein kinase superfamily. Tyr protein kinase family. Insulin receptor subfamily.

It catalyses the reaction L-tyrosyl-[protein] + ATP = O-phospho-L-tyrosyl-[protein] + ADP + H(+). This Galliformes (UR2SV) protein is Tyrosine-protein kinase transforming protein ros (V-ROS).